Here is a 438-residue protein sequence, read N- to C-terminus: 3-phosphoshikimate 1-carboxyvinyltransferase (438 aa).

3-phosphoshikimate is bound by residues lysine 26, serine 27, and arginine 31. Residue lysine 26 participates in phosphoenolpyruvate binding. Residues glycine 99 and arginine 127 each coordinate phosphoenolpyruvate. 3-phosphoshikimate contacts are provided by serine 170, serine 171, glutamine 172, serine 199, glutamate 314, and histidine 343. Position 172 (glutamine 172) interacts with phosphoenolpyruvate. Glutamate 314 (proton acceptor) is an active-site residue. Phosphoenolpyruvate-binding residues include arginine 347, arginine 388, and lysine 413.

It belongs to the EPSP synthase family. As to quaternary structure, monomer.

Its subcellular location is the cytoplasm. It carries out the reaction 3-phosphoshikimate + phosphoenolpyruvate = 5-O-(1-carboxyvinyl)-3-phosphoshikimate + phosphate. Its pathway is metabolic intermediate biosynthesis; chorismate biosynthesis; chorismate from D-erythrose 4-phosphate and phosphoenolpyruvate: step 6/7. Catalyzes the transfer of the enolpyruvyl moiety of phosphoenolpyruvate (PEP) to the 5-hydroxyl of shikimate-3-phosphate (S3P) to produce enolpyruvyl shikimate-3-phosphate and inorganic phosphate. In Mycobacterium sp. (strain MCS), this protein is 3-phosphoshikimate 1-carboxyvinyltransferase.